The primary structure comprises 636 residues: Eisosome protein sle1 (636 aa).

Residues 1-297 (MSHASKNYNA…HVIIYENKEG (297 aa)) are required for targeting the protein to eisosomes. 6 disordered regions span residues 111–205 (ANYM…SPAN), 222–284 (YSPS…VPPV), 313–387 (DPSG…TQHF), 400–451 (QYYQ…QPSL), 467–550 (DITP…VNNA), and 572–604 (PSNH…RFAN). Composition is skewed to polar residues over residues 131–159 (PSQQ…QSYQ), 166–178 (RTSQ…NNYS), 188–204 (RRSS…GSPA), 237–255 (SYNN…TQKS), and 315–354 (SGSN…VVSR). Positions 355 to 383 (SGQNNNQPAQPGQYNQQSQPVQSYQSGQS) are enriched in low complexity. Composition is skewed to polar residues over residues 400 to 412 (QYYQ…QPVQ) and 422 to 439 (PVQS…QPVQ). Over residues 471–484 (TASSTTANNAYASA) the composition is skewed to low complexity. A compositionally biased stretch (basic and acidic residues) spans 503–512 (SFERERDSGR). Residues 572-589 (PSNHAYSEGRSYTFTGGQ) are compositionally biased toward polar residues.

As to quaternary structure, component of eisosomes, large cytoplasmic protein assemblies that localize to specialized domains termed MCCs on the plasma membrane.

Its subcellular location is the cytoplasm. It is found in the cell cortex. The protein resides in the cell tip. Its function is as follows. Important for the biogenesis of filamentous eisosomes, large cytoplasmic protein assemblies that localize to specialized domains on the plasma membrane to cluster specific proteins at sites of membrane invaginations. This is Eisosome protein sle1 (sle1) from Schizosaccharomyces pombe (strain 972 / ATCC 24843) (Fission yeast).